A 337-amino-acid polypeptide reads, in one-letter code: Zinc finger protein Gfi-1b (337 aa).

The mediates repression of transcription stretch occupies residues 1–20; that stretch reads MPRSFLVKSKKAHTYHQHRF. The SNAG domain stretch occupies residues 1-20; that stretch reads MPRSFLVKSKKAHTYHQHRF. 6 consecutive C2H2-type zinc fingers follow at residues 170-193, 199-221, 227-249, 255-277, 283-305, and 311-334; these read YHCV…RRSH, FACE…TNIH, FECK…LLIH, YPCQ…TYIH, HKCQ…SRKH, and FSCE…ETQH.

As to expression, expressed in erythroid cells of primitive and definitive lineage and bone marrow cells.

Its subcellular location is the nucleus. Essential transcriptional regulator necessary for development and differentiation of erythroid and megakaryocytic lineages. Alters histone methylation by recruiting histone methyltransferase to target genes promoters. Plays a role in heterochromatin formation. The sequence is that of Zinc finger protein Gfi-1b (GFI1B) from Gallus gallus (Chicken).